Here is a 165-residue protein sequence, read N- to C-terminus: Ribonuclease H2 subunit C (165 aa).

The residue at position 1 (Met-1) is an N-acetylmethionine.

The protein belongs to the RNase H2 subunit C family. The RNase H2 complex is a heterotrimer composed of the catalytic subunit RNASEH2A and the non-catalytic subunits RNASEH2B and RNASEH2C.

It is found in the nucleus. Functionally, non catalytic subunit of RNase H2, an endonuclease that specifically degrades the RNA of RNA:DNA hybrids. Participates in DNA replication, possibly by mediating the removal of lagging-strand Okazaki fragment RNA primers during DNA replication. Mediates the excision of single ribonucleotides from DNA:RNA duplexes. This Bos taurus (Bovine) protein is Ribonuclease H2 subunit C (RNASEH2C).